The primary structure comprises 204 residues: Glideosome-associated protein 45 (204 aa).

Residues 1–86 (MGNKCSRSKV…KEEIDYATQE (86 aa)) are disordered. Glycine 2 carries the N-myristoyl glycine lipid modification. Residues 2–29 (GNKCSRSKVKEPKRKDIDELAERENLKK) form a targets GAP45 to the cell membrane; however, dispensable for the formation of the glideosome complex and the association with the inner membrane complex region. Residues 9–53 (KVKEPKRKDIDELAERENLKKQSEEIIEEKPEEVVEQVEETHEEP) show a composition bias toward basic and acidic residues. Positions 54–73 (LEQEQELDEQKIEEEEEEPE) are enriched in acidic residues. Phosphoserine; by CPK10 is present on serine 89. Serine 103 carries the phosphoserine; by CPK10 and PKB modification. Serine 149 carries the post-translational modification Phosphoserine; by CPK10.

Component of the glideosome complex composed of GAP50, GAP45, MTIP and MyoA; the complex is formed during the late schizont stage and in merozoites. MyoA, MTIP and GAP45 probably form an initial complex in the cytoplasm which is then recruited to the outer face of the inner membrane complex via the interaction with GAP50. Interacts with GAP50; the interaction is independent of GAP45 phosphorylation status and can also occur independently of the formation of the glideosome complex. In terms of processing, phosphorylated at multiple sites. Phosphorylation increases during the schizont stage and peaks in segmented merozoites. May be phosphorylated by PKB. In schizonts, phosphorylated at Ser-89 and Ser-149 in response to phospholipase C-mediated calcium release. Phosphorylation at Ser-149 begins in early schizonts while phosphorylation at Ser-103 begins in late schizonts. Phosphorylation at Ser-89, Ser-103 and Ser-149 appears to be dispensable for GAP45 inner membrane complex localization or GAP45 inclusion in the glideosome complex. Phosphorylation is not required for interaction with GAP50; however, it may regulate the interaction with MTIP and MyoA. N-myristoylated by NMT. N-myristoylation may contribute to the targeting of GAP45 to the inner membrane complex with the subsequent palmitoylation strengthening the interaction with the membrane. Post-translationally, palmitoylated. Palmitoylation appears to follow N-myristoylation and may strengthen the interaction with the inner membrane complex.

It localises to the inner membrane complex. Its function is as follows. Component of the glideosome complex, an inner membrane complex structure involved in parasite gliding motility and host cell invasion. During the asexual blood stage, required in schizonts to recruit MTIP and MyoA to the inner membrane complex where they assemble with GAP50 to form the glideosome complex. By regulating the formation of the glideosome, plays an essential role during merozoite invasion of host erythrocytes. This Plasmodium falciparum (isolate 3D7) protein is Glideosome-associated protein 45.